A 135-amino-acid chain; its full sequence is UPF0102 protein PGN_1801 (135 aa).

The protein belongs to the UPF0102 family.

This Porphyromonas gingivalis (strain ATCC 33277 / DSM 20709 / CIP 103683 / JCM 12257 / NCTC 11834 / 2561) protein is UPF0102 protein PGN_1801.